The chain runs to 591 residues: Uncoordinated protein 58 (591 aa).

Residues 1–24 are disordered; that stretch reads MFFYSPNVAPQPSSTSHRRPTLTH. A helical transmembrane segment spans residues 184 to 204; that stretch reads VILVSVLIGYLCLGAWILMLL. Residue Asn-226 is glycosylated (N-linked (GlcNAc...) asparagine). The next 5 helical transmembrane spans lie at 289 to 309, 318 to 338, 400 to 420, 428 to 448, and 453 to 473; these read TFPT…YGEV, VFSV…AADI, PIGA…AMFI, FIHA…GDIV, and IFLS…TMCV.

It belongs to the two pore domain potassium channel (TC 1.A.1.8) family.

The protein localises to the membrane. Functionally, has a role in mobility, possibly in the transport of potassium in muscles. This chain is Uncoordinated protein 58, found in Caenorhabditis elegans.